The sequence spans 223 residues: Urease accessory protein UreF (223 aa).

It belongs to the UreF family. As to quaternary structure, ureD, UreF and UreG form a complex that acts as a GTP-hydrolysis-dependent molecular chaperone, activating the urease apoprotein by helping to assemble the nickel containing metallocenter of UreC. The UreE protein probably delivers the nickel.

The protein localises to the cytoplasm. In terms of biological role, required for maturation of urease via the functional incorporation of the urease nickel metallocenter. In Rhizobium leguminosarum bv. viciae, this protein is Urease accessory protein UreF.